We begin with the raw amino-acid sequence, 673 residues long: Annexin A6 (673 aa).

An N-acetylalanine modification is found at Ala2. Ser13 is subject to Phosphoserine. Annexin repeat units follow at residues 20–91 (FDPN…GLMR), 92–163 (PPAY…VLLQ), 175–247 (DLVQ…AVVK), 251–322 (STPE…KLSG), 363–434 (FNPD…GLMM), 435–506 (PPAH…SLAT), 521–595 (EDAQ…AIVQ), and 599–670 (NKPL…ALCG). Residue Tyr30 is modified to Phosphotyrosine. Residues Lys63, Lys68, Lys75, and Lys81 each carry the N6-acetyllysine modification. At Tyr201 the chain carries Phosphotyrosine. 3 positions are modified to N6-acetyllysine: Lys306, Lys370, and Lys418. The residue at position 422 (Ser422) is a Phosphoserine. At Lys483 the chain carries N6-acetyllysine. The residue at position 537 (Ser537) is a Phosphoserine. The residue at position 620 (Lys620) is an N6-acetyllysine.

Belongs to the annexin family. Phosphorylated in response to growth factor stimulation.

The protein resides in the cytoplasm. It localises to the melanosome. Its function is as follows. May associate with CD21. May regulate the release of Ca(2+) from intracellular stores. The sequence is that of Annexin A6 (ANXA6) from Homo sapiens (Human).